The chain runs to 771 residues: Protein translocase subunit SecA 2 (771 aa).

ATP-binding positions include Gln-91, 109-113 (GEGKT), and Asp-496.

It belongs to the SecA family. In terms of assembly, monomer and homodimer. Part of the essential Sec protein translocation apparatus which comprises SecA, SecYEG and auxiliary proteins SecDF. Other proteins may also be involved.

The protein localises to the cell membrane. The protein resides in the cytoplasm. It carries out the reaction ATP + H2O + cellular proteinSide 1 = ADP + phosphate + cellular proteinSide 2.. In terms of biological role, part of the Sec protein translocase complex. Interacts with the SecYEG preprotein conducting channel. Has a central role in coupling the hydrolysis of ATP to the transfer of proteins into and across the cell membrane, serving as an ATP-driven molecular motor driving the stepwise translocation of polypeptide chains across the membrane. This is Protein translocase subunit SecA 2 from Corynebacterium jeikeium (strain K411).